The sequence spans 166 residues: uncharacterized protein (166 aa).

Residues 28–55 (SRQVHPPWPVPCKSKLQEQDSSESKESK) form a disordered region. Positions 42–55 (KLQEQDSSESKESK) are enriched in basic and acidic residues. Residues 67 to 163 (QNAMLYIENN…NYTPKQFKRT (97 aa)) enclose the HTH araC/xylS-type domain. DNA-binding regions (H-T-H motif) lie at residues 84-105 (DTVA…KLAT) and 130-153 (VTET…KKRT).

This is an uncharacterized protein from Pseudoalteromonas carrageenovora (Alteromonas carrageenovora).